Reading from the N-terminus, the 369-residue chain is tRNA-specific 2-thiouridylase MnmA (369 aa).

ATP-binding positions include 12-19 (GMSGGVDS) and Met38. The interval 98–100 (NPD) is interaction with target base in tRNA. Catalysis depends on Cys103, which acts as the Nucleophile. Cys103 and Cys200 form a disulfide bridge. Residue Gly128 participates in ATP binding. Positions 150 to 152 (KDQ) are interaction with tRNA. Cys200 (cysteine persulfide intermediate) is an active-site residue. The tract at residues 312–313 (RY) is interaction with tRNA.

Belongs to the MnmA/TRMU family.

It localises to the cytoplasm. It carries out the reaction S-sulfanyl-L-cysteinyl-[protein] + uridine(34) in tRNA + AH2 + ATP = 2-thiouridine(34) in tRNA + L-cysteinyl-[protein] + A + AMP + diphosphate + H(+). Functionally, catalyzes the 2-thiolation of uridine at the wobble position (U34) of tRNA, leading to the formation of s(2)U34. In Tolumonas auensis (strain DSM 9187 / NBRC 110442 / TA 4), this protein is tRNA-specific 2-thiouridylase MnmA.